The sequence spans 481 residues: MAQPATPRTMAEKVWADHVVAHGTGEGAAREPDLIYIDLHLVHEVTSPQAFDGLRLANRPVRRPDLTIATEDHNVPTVDIDKPIADPVSRTQVETLRRNCAEFGIRLHPMGDAEQGIVHIIGPQLGLTQPGMTVVCGDSHTSTHGAFGALAMGIGTSEVEHVLATQTLPLRPFRTMAVNVDGELPPGVSAKDIILAVIAKIGTGGGQGHVIEYRGSAIESLSMEGRMTICNMSIEAGARAGMVAPDDTTFEFLRGRPHAPTGADWDAAVEAWRQLRTDPGAEFDTEVHLDAAELSPFVTWGTNPGQGVPLSGAVPDPELIVDEGERQAAEKALTYMGLQAGTAMRDVAVDTVFVGSCTNGRIEDLRVVADVLRGRRVADGIRMLVVPGSMRVRAQAESEGLDRIFIDAGAEWRQAGCSMCLGMNPDQLSPGQRCASTSNRNFEGRQGKGGRTHLVSPAVAAATAVRGTLSSPADLSAVPAR.

Residues C357, C417, and C420 each contribute to the [4Fe-4S] cluster site. Positions S429 to N441 are enriched in polar residues. The interval S429–R451 is disordered.

This sequence belongs to the aconitase/IPM isomerase family. LeuC type 1 subfamily. As to quaternary structure, heterodimer of LeuC and LeuD. [4Fe-4S] cluster serves as cofactor.

It carries out the reaction (2R,3S)-3-isopropylmalate = (2S)-2-isopropylmalate. It participates in amino-acid biosynthesis; L-leucine biosynthesis; L-leucine from 3-methyl-2-oxobutanoate: step 2/4. Functionally, catalyzes the isomerization between 2-isopropylmalate and 3-isopropylmalate, via the formation of 2-isopropylmaleate. This is 3-isopropylmalate dehydratase large subunit from Mycobacterium sp. (strain JLS).